Here is a 208-residue protein sequence, read N- to C-terminus: Small ribosomal subunit protein uS4 (208 aa).

The S4 RNA-binding domain occupies 98–159; the sequence is RRLDNVIYRL…KSRTVAVITN (62 aa).

It belongs to the universal ribosomal protein uS4 family. As to quaternary structure, part of the 30S ribosomal subunit. Contacts protein S5. The interaction surface between S4 and S5 is involved in control of translational fidelity.

Its function is as follows. One of the primary rRNA binding proteins, it binds directly to 16S rRNA where it nucleates assembly of the body of the 30S subunit. With S5 and S12 plays an important role in translational accuracy. This Desulfatibacillum aliphaticivorans protein is Small ribosomal subunit protein uS4.